The sequence spans 239 residues: Small ribosomal subunit protein uS2 (239 aa).

Belongs to the universal ribosomal protein uS2 family.

The sequence is that of Small ribosomal subunit protein uS2 from Synechococcus sp. (strain WH7803).